The sequence spans 750 residues: Photosystem I P700 chlorophyll a apoprotein A1 (750 aa).

Transmembrane regions (helical) follow at residues 70–93, 156–179, 195–219, 291–309, 346–369, 385–411, 433–455, and 531–549; these read VFSAHFGQLSIIFLWLSGMYFHGA, LYCTAIGALVFAALMLFAGWFHYH, LNHHLAGLLGLGSLSWAGHQVHVSL, IAHHHLAIAILFLIAGHMY, WHAQLSLNLAMLGSLTIVVAHHMY, LSLFTHHMWIGGFLIVGAAAHAAIFMV, AIISHLNWVCIFLGFHSFGLYIH, and FLVHHIHAFTIHVTVLILL. The [4Fe-4S] cluster site is built by Cys-573 and Cys-582. The next 2 helical transmembrane spans lie at 589–610 and 664–686; these read HVFLGLFWMYNAISVVIFHFSW and LSAYGLFFLGAHFVWAFSLMFLF. His-675 lines the chlorophyll a' pocket. 2 residues coordinate chlorophyll a: Met-683 and Tyr-691. Position 692 (Trp-692) interacts with phylloquinone. Residues 724-744 form a helical membrane-spanning segment; sequence AVGVTHYLLGGIATTWAFFLA.

It belongs to the PsaA/PsaB family. As to quaternary structure, the PsaA/B heterodimer binds the P700 chlorophyll special pair and subsequent electron acceptors. PSI consists of a core antenna complex that captures photons, and an electron transfer chain that converts photonic excitation into a charge separation. The eukaryotic PSI reaction center is composed of at least 11 subunits. The cofactor is P700 is a chlorophyll a/chlorophyll a' dimer, A0 is one or more chlorophyll a, A1 is one or both phylloquinones and FX is a shared 4Fe-4S iron-sulfur center..

The protein localises to the plastid. The protein resides in the chloroplast thylakoid membrane. The enzyme catalyses reduced [plastocyanin] + hnu + oxidized [2Fe-2S]-[ferredoxin] = oxidized [plastocyanin] + reduced [2Fe-2S]-[ferredoxin]. Functionally, psaA and PsaB bind P700, the primary electron donor of photosystem I (PSI), as well as the electron acceptors A0, A1 and FX. PSI is a plastocyanin-ferredoxin oxidoreductase, converting photonic excitation into a charge separation, which transfers an electron from the donor P700 chlorophyll pair to the spectroscopically characterized acceptors A0, A1, FX, FA and FB in turn. Oxidized P700 is reduced on the lumenal side of the thylakoid membrane by plastocyanin. This chain is Photosystem I P700 chlorophyll a apoprotein A1, found in Draba nemorosa (Woodland whitlowgrass).